Here is a 37-residue protein sequence, read N- to C-terminus: Large ribosomal subunit protein bL36 (37 aa).

This sequence belongs to the bacterial ribosomal protein bL36 family.

The protein is Large ribosomal subunit protein bL36 of Desulfotalea psychrophila (strain LSv54 / DSM 12343).